Here is a 220-residue protein sequence, read N- to C-terminus: Small ribosomal subunit protein uS3 (220 aa).

Positions 38–106 constitute a KH type-2 domain; sequence IRNFINKKLQ…QVHINIVEIK (69 aa).

The protein belongs to the universal ribosomal protein uS3 family. As to quaternary structure, part of the 30S ribosomal subunit. Forms a tight complex with proteins S10 and S14.

Its function is as follows. Binds the lower part of the 30S subunit head. Binds mRNA in the 70S ribosome, positioning it for translation. In Lacticaseibacillus paracasei (strain ATCC 334 / BCRC 17002 / CCUG 31169 / CIP 107868 / KCTC 3260 / NRRL B-441) (Lactobacillus paracasei), this protein is Small ribosomal subunit protein uS3.